We begin with the raw amino-acid sequence, 155 residues long: Transcriptional repressor NrdR (155 aa).

The segment at 3 to 34 (CPNCHQNASRVIDSRPTDEGRTIRRRRECENC) is a zinc-finger region. The region spanning 49 to 139 (LLVIKNDGTR…IYRQFTDMSS (91 aa)) is the ATP-cone domain.

Belongs to the NrdR family. Requires Zn(2+) as cofactor.

Negatively regulates transcription of bacterial ribonucleotide reductase nrd genes and operons by binding to NrdR-boxes. The sequence is that of Transcriptional repressor NrdR from Lactobacillus delbrueckii subsp. bulgaricus (strain ATCC 11842 / DSM 20081 / BCRC 10696 / JCM 1002 / NBRC 13953 / NCIMB 11778 / NCTC 12712 / WDCM 00102 / Lb 14).